The following is a 322-amino-acid chain: HPr kinase/phosphorylase (322 aa).

Active-site residues include His-146 and Lys-167. 161-168 is a binding site for ATP; that stretch reads GDSGLGKS. Ser-168 contributes to the Mg(2+) binding site. The active-site Proton acceptor; for phosphorylation activity. Proton donor; for dephosphorylation activity is the Asp-185. The interval 209–218 is important for the catalytic mechanism of both phosphorylation and dephosphorylation; that stretch reads LEVRGLGLLD. Residue Glu-210 coordinates Mg(2+). Arg-250 is an active-site residue. The important for the catalytic mechanism of dephosphorylation stretch occupies residues 271-276; the sequence is QVAAGR.

Belongs to the HPrK/P family. Homohexamer. The cofactor is Mg(2+).

It catalyses the reaction [HPr protein]-L-serine + ATP = [HPr protein]-O-phospho-L-serine + ADP + H(+). The catalysed reaction is [HPr protein]-O-phospho-L-serine + phosphate + H(+) = [HPr protein]-L-serine + diphosphate. In terms of biological role, catalyzes the ATP- as well as the pyrophosphate-dependent phosphorylation of a specific serine residue in HPr, a phosphocarrier protein of the phosphoenolpyruvate-dependent sugar phosphotransferase system (PTS). HprK/P also catalyzes the pyrophosphate-producing, inorganic phosphate-dependent dephosphorylation (phosphorolysis) of seryl-phosphorylated HPr (P-Ser-HPr). In Burkholderia multivorans (strain ATCC 17616 / 249), this protein is HPr kinase/phosphorylase.